The following is a 698-amino-acid chain: Capon-like protein (698 aa).

Residues 25–194 enclose the PID domain; the sequence is FFHGITFQAK…SELLDVEQIS (170 aa). Positions 191 to 240 are disordered; that stretch reads EQISEQQLSEDGERGGGDNETPKKEHLAITPDLNHTQPQRPNHLDIMPSH. Residues 201–217 show a composition bias toward basic and acidic residues; that stretch reads DGERGGGDNETPKKEHL. Coiled coils occupy residues 265–327, 379–484, and 554–583; these read RSEI…LASL, NQQL…LNAN, and LNEDIRLSIEQNLNNLEEQLKAAVSNGNLA. Over residues 396–423 the composition is skewed to low complexity; sequence SQHLQNLQQQQQQQQQQQQQQTQAAPTA. Residues 396–460 form a disordered region; sequence SQHLQNLQQQ…QQQQQQQQDA (65 aa). The span at 436–447 shows a compositional bias: polar residues; that stretch reads YPSMSALQSISN. The span at 448–458 shows a compositional bias: low complexity; the sequence is QLQQQQQQQQQ. Residues 588 to 698 form a disordered region; that stretch reads GGSTSTRDTS…RTTWARHTTK (111 aa). The span at 590 to 640 shows a compositional bias: low complexity; the sequence is STSTRDTSRSSSTLDSPSSPRLRSSNNNISPGSSNGNQNHNNNSNSNSSSS. 2 stretches are compositionally biased toward polar residues: residues 662–672 and 679–698; these read LSATPSFITRS and NRSQMMSQVQRTTWARHTTK.

Expressed at higher level in wing imaginal disk.

In terms of biological role, putative adapter protein. This is Capon-like protein from Drosophila melanogaster (Fruit fly).